The sequence spans 258 residues: Trans-aconitate 2-methyltransferase (258 aa).

This sequence belongs to the methyltransferase superfamily. Tam family.

The protein resides in the cytoplasm. The enzyme catalyses trans-aconitate + S-adenosyl-L-methionine = (E)-3-(methoxycarbonyl)pent-2-enedioate + S-adenosyl-L-homocysteine. In terms of biological role, catalyzes the S-adenosylmethionine monomethyl esterification of trans-aconitate. In Acidovorax ebreus (strain TPSY) (Diaphorobacter sp. (strain TPSY)), this protein is Trans-aconitate 2-methyltransferase.